The following is a 435-amino-acid chain: Cyclic 2,3-diphosphoglycerate synthetase (435 aa).

The protein belongs to the cyclic 2,3-diphosphoglycerate synthetase family.

The protein localises to the cytoplasm. It carries out the reaction (2R)-2,3-bisphosphoglycerate + ATP + H(+) = cyclic (2R)-2,3-bisphosphoglycerate + ADP + phosphate. Catalyzes the formation of cyclic 2,3-diphosphoglycerate (cDPG) by formation of an intramolecular phosphoanhydride bond at the expense of ATP. This is Cyclic 2,3-diphosphoglycerate synthetase from Pyrococcus horikoshii (strain ATCC 700860 / DSM 12428 / JCM 9974 / NBRC 100139 / OT-3).